The following is a 427-amino-acid chain: Probable WRKY transcription factor 35 (427 aa).

2 disordered regions span residues 1-45 (MDNF…DLHV) and 266-336 (YTSE…HPPF). Over residues 23-40 (SPGPPEGPSPSSMSPPPT) the composition is skewed to pro residues. Residues 209–275 (SGEVVPSDLW…YTSEHNHPWP (67 aa)) constitute a DNA-binding region (WRKY). Positions 284 to 310 (STRSSSSSSLNPSSKSSTAAATTSPSS) are enriched in low complexity. A compositionally biased stretch (polar residues) spans 311–333 (RVFQNNSSKDEPNNSNLPSSSTH).

Belongs to the WRKY group II-e family.

The protein resides in the nucleus. Transcription factor. Interacts specifically with the W box (5'-(T)TGAC[CT]-3'), a frequently occurring elicitor-responsive cis-acting element. In Arabidopsis thaliana (Mouse-ear cress), this protein is Probable WRKY transcription factor 35 (WRKY35).